The primary structure comprises 64 residues: Small ribosomal subunit protein bS21 (64 aa).

Belongs to the bacterial ribosomal protein bS21 family.

The chain is Small ribosomal subunit protein bS21 from Anaeromyxobacter dehalogenans (strain 2CP-1 / ATCC BAA-258).